Reading from the N-terminus, the 474-residue chain is Bifunctional protein HldE (474 aa).

A ribokinase region spans residues 1–318 (MKLSMPRFDQ…RAIQREEGSE (318 aa)). Residue 194 to 197 (NLSE) coordinates ATP. Asp-263 is an active-site residue. Residues 343 to 474 (FTNGCFDILH…AIVEKIRGQG (132 aa)) form a cytidylyltransferase region.

The protein in the N-terminal section; belongs to the carbohydrate kinase PfkB family. It in the C-terminal section; belongs to the cytidylyltransferase family. In terms of assembly, homodimer.

The catalysed reaction is D-glycero-beta-D-manno-heptose 7-phosphate + ATP = D-glycero-beta-D-manno-heptose 1,7-bisphosphate + ADP + H(+). It catalyses the reaction D-glycero-beta-D-manno-heptose 1-phosphate + ATP + H(+) = ADP-D-glycero-beta-D-manno-heptose + diphosphate. It functions in the pathway nucleotide-sugar biosynthesis; ADP-L-glycero-beta-D-manno-heptose biosynthesis; ADP-L-glycero-beta-D-manno-heptose from D-glycero-beta-D-manno-heptose 7-phosphate: step 1/4. The protein operates within nucleotide-sugar biosynthesis; ADP-L-glycero-beta-D-manno-heptose biosynthesis; ADP-L-glycero-beta-D-manno-heptose from D-glycero-beta-D-manno-heptose 7-phosphate: step 3/4. In terms of biological role, catalyzes the phosphorylation of D-glycero-D-manno-heptose 7-phosphate at the C-1 position to selectively form D-glycero-beta-D-manno-heptose-1,7-bisphosphate. Catalyzes the ADP transfer from ATP to D-glycero-beta-D-manno-heptose 1-phosphate, yielding ADP-D-glycero-beta-D-manno-heptose. This chain is Bifunctional protein HldE, found in Pseudomonas syringae pv. tomato (strain ATCC BAA-871 / DC3000).